The chain runs to 550 residues: Undecaprenyl phosphate-alpha-4-amino-4-deoxy-L-arabinose arabinosyl transferase 2 (550 aa).

11 consecutive transmembrane segments (helical) span residues 4-24 (LKPG…PLSF), 81-101 (FAVH…VYWL), 110-132 (WLGL…GTYA), 176-196 (FMTK…PWVI), 204-224 (VFIY…PWVI), 255-275 (APFW…LGLL), 288-308 (TQSG…FFSL), 313-333 (LPTY…RYAA), 348-368 (LLFG…WGLA), 381-401 (VLLG…TLRA), and 409-429 (AALC…QQVI).

The protein belongs to the glycosyltransferase 83 family.

Its subcellular location is the cell inner membrane. It catalyses the reaction 4-amino-4-deoxy-alpha-L-arabinopyranosyl di-trans,octa-cis-undecaprenyl phosphate + lipid IVA = lipid IIA + di-trans,octa-cis-undecaprenyl phosphate.. The protein operates within lipopolysaccharide metabolism; 4-amino-4-deoxy-beta-L-arabinose-lipid A biosynthesis. In terms of biological role, catalyzes the transfer of the L-Ara4N moiety of the glycolipid undecaprenyl phosphate-alpha-L-Ara4N to lipid A. The modified arabinose is attached to lipid A and is required for resistance to polymyxin and cationic antimicrobial peptides. The sequence is that of Undecaprenyl phosphate-alpha-4-amino-4-deoxy-L-arabinose arabinosyl transferase 2 from Sodalis glossinidius (strain morsitans).